A 154-amino-acid chain; its full sequence is MALSLYLIAVICSLVGFTASQQTCDNDNRFCFPNVVANWIGAAEYCSRNGWRLAVLDSEQKQQQVEELAQRVDAFKTAKVELWIGASDLAREGKFMWHPTGLDVSYSKWIAGMPDNKDGYEHCVHLWYEPSRLINWHWNDVVCASMRRFVCEQA.

An N-terminal signal peptide occupies residues 1–20 (MALSLYLIAVICSLVGFTAS). The C-type lectin domain maps to 27 to 152 (DNRFCFPNVV…CASMRRFVCE (126 aa)). Cystine bridges form between Cys-46–Cys-151 and Cys-123–Cys-143.

In terms of assembly, (Microbial infection) Interacts with non-structural protein 1 of dengue virus type 2. Interacts with envelope protein E of dengue virus type 2. In terms of tissue distribution, female salivary gland (at protein level). Not detected in female carcass without salivary glands (at protein level). Not detected in male tissues (at protein level).

The protein localises to the secreted. Its function is as follows. Putative lectin. May have a regulatory role in mosquito immunity. Probably suppresses replication of dengue virus type 2 in mosquito salivary glands. The chain is C-type lectin 16 from Aedes aegypti (Yellowfever mosquito).